We begin with the raw amino-acid sequence, 494 residues long: Aspartyl/glutamyl-tRNA(Asn/Gln) amidotransferase subunit B (494 aa).

It belongs to the GatB/GatE family. GatB subfamily. Heterotrimer of A, B and C subunits.

The enzyme catalyses L-glutamyl-tRNA(Gln) + L-glutamine + ATP + H2O = L-glutaminyl-tRNA(Gln) + L-glutamate + ADP + phosphate + H(+). It catalyses the reaction L-aspartyl-tRNA(Asn) + L-glutamine + ATP + H2O = L-asparaginyl-tRNA(Asn) + L-glutamate + ADP + phosphate + 2 H(+). In terms of biological role, allows the formation of correctly charged Asn-tRNA(Asn) or Gln-tRNA(Gln) through the transamidation of misacylated Asp-tRNA(Asn) or Glu-tRNA(Gln) in organisms which lack either or both of asparaginyl-tRNA or glutaminyl-tRNA synthetases. The reaction takes place in the presence of glutamine and ATP through an activated phospho-Asp-tRNA(Asn) or phospho-Glu-tRNA(Gln). The polypeptide is Aspartyl/glutamyl-tRNA(Asn/Gln) amidotransferase subunit B (Synechococcus elongatus (strain ATCC 33912 / PCC 7942 / FACHB-805) (Anacystis nidulans R2)).